Reading from the N-terminus, the 288-residue chain is Small ribosomal subunit biogenesis GTPase RsgA (288 aa).

The CP-type G domain occupies 61-218 (TNKLIRPPVS…IVDTPGFSSL (158 aa)). Residues 110–113 (NKID) and 161–169 (GPSGVGKST) each bind GTP. Zn(2+) is bound by residues Cys242, Cys247, His249, and Cys255.

It belongs to the TRAFAC class YlqF/YawG GTPase family. RsgA subfamily. As to quaternary structure, monomer. Associates with 30S ribosomal subunit, binds 16S rRNA. The cofactor is Zn(2+).

It is found in the cytoplasm. Its function is as follows. One of several proteins that assist in the late maturation steps of the functional core of the 30S ribosomal subunit. Helps release RbfA from mature subunits. May play a role in the assembly of ribosomal proteins into the subunit. Circularly permuted GTPase that catalyzes slow GTP hydrolysis, GTPase activity is stimulated by the 30S ribosomal subunit. This is Small ribosomal subunit biogenesis GTPase RsgA from Clostridium acetobutylicum (strain ATCC 824 / DSM 792 / JCM 1419 / IAM 19013 / LMG 5710 / NBRC 13948 / NRRL B-527 / VKM B-1787 / 2291 / W).